Reading from the N-terminus, the 136-residue chain is NADPH-dependent 7-cyano-7-deazaguanine reductase (136 aa).

C53 serves as the catalytic Thioimide intermediate. D60 acts as the Proton donor in catalysis. Substrate is bound by residues 75–77 (VEL) and 94–95 (HE).

This sequence belongs to the GTP cyclohydrolase I family. QueF type 1 subfamily.

Its subcellular location is the cytoplasm. The enzyme catalyses 7-aminomethyl-7-carbaguanine + 2 NADP(+) = 7-cyano-7-deazaguanine + 2 NADPH + 3 H(+). It functions in the pathway tRNA modification; tRNA-queuosine biosynthesis. Its function is as follows. Catalyzes the NADPH-dependent reduction of 7-cyano-7-deazaguanine (preQ0) to 7-aminomethyl-7-deazaguanine (preQ1). This Trichormus variabilis (strain ATCC 29413 / PCC 7937) (Anabaena variabilis) protein is NADPH-dependent 7-cyano-7-deazaguanine reductase.